The following is a 1650-amino-acid chain: Transmembrane domain-containing protein DDB_G0287209 (1650 aa).

Residues 194 to 225 are a coiled coil; that stretch reads NNNNNNFNNNNNNNNNNNNNKNNYNNNKSNLI. 2 disordered regions span residues 197 to 216 and 1218 to 1296; these read NNNF…NKNN and ENQF…NINN. Low complexity predominate over residues 1224 to 1284; it reads NNNENSGSSG…SNSNENNYNG (61 aa). Transmembrane regions (helical) follow at residues 1314–1334, 1347–1369, 1390–1410, 1454–1474, 1489–1509, 1515–1535, 1539–1559, 1570–1590, and 1595–1615; these read PLLL…LSLF, ILFL…LQLF, ISIS…DVTS, WNIY…LIVP, ILFI…VILF, WWDL…VTLL, PVYF…QFAF, VENL…TSII, and FNLI…ITII.

The protein localises to the membrane. This Dictyostelium discoideum (Social amoeba) protein is Transmembrane domain-containing protein DDB_G0287209.